Reading from the N-terminus, the 555-residue chain is Glutamine--tRNA ligase (555 aa).

The 'HIGH' region motif lies at 34–44 (PEPNGYLHIGH). Residues 35-37 (EPN) and 41-47 (HIGHAKS) each bind ATP. The L-glutamine site is built by aspartate 67 and tyrosine 212. ATP-binding positions include threonine 231, 261–262 (RL), and 269–271 (MSK). The short motif at 268–272 (VMSKR) is the 'KMSKS' region element.

This sequence belongs to the class-I aminoacyl-tRNA synthetase family. In terms of assembly, monomer.

Its subcellular location is the cytoplasm. The catalysed reaction is tRNA(Gln) + L-glutamine + ATP = L-glutaminyl-tRNA(Gln) + AMP + diphosphate. The chain is Glutamine--tRNA ligase from Cronobacter sakazakii (strain ATCC BAA-894) (Enterobacter sakazakii).